The chain runs to 343 residues: Protein RecA (343 aa).

66–73 (GPESSGKT) is a binding site for ATP.

This sequence belongs to the RecA family.

Its subcellular location is the cytoplasm. In terms of biological role, can catalyze the hydrolysis of ATP in the presence of single-stranded DNA, the ATP-dependent uptake of single-stranded DNA by duplex DNA, and the ATP-dependent hybridization of homologous single-stranded DNAs. It interacts with LexA causing its activation and leading to its autocatalytic cleavage. In Rickettsia bellii (strain RML369-C), this protein is Protein RecA.